Reading from the N-terminus, the 348-residue chain is Actin maturation protease (348 aa).

Residues Met1 to Thr18 are compositionally biased toward pro residues. The segment at Met1–Phe64 is disordered. A compositionally biased stretch (low complexity) spans Asn34–Ser48. Over residues Val49–Arg60 the composition is skewed to pro residues. The segment at Ser121–Gly241 is peptidase C39-like. Cys129 is a catalytic residue. Ser313 carries the phosphoserine modification.

This sequence belongs to the ACTMAP family. In terms of assembly, interacts (via N-terminus) with PFN2; the interaction may facilitate efficient cleavage of the acetylated N-terminus of immature actin. Interacts with PFN1.

It localises to the cytoplasm. The catalysed reaction is N-terminal N(alpha)-acetyl-L-methionyl-L-aspartyl-[protein] + H2O = N-terminal L-aspartyl-[protein] + N-acetyl-L-methionine. It catalyses the reaction N-terminal N(alpha)-acetyl-L-methionyl-L-glutamyl-[protein] + H2O = N-terminal L-glutamyl-[protein] + N-acetyl-L-methionine. The enzyme catalyses N-terminal N(alpha)-acetyl-L-cysteinyl-L-aspartyl-[protein] + H2O = N-terminal L-aspartyl-[protein] + N-acetyl-L-cysteine. It carries out the reaction N-terminal N(alpha)-acetyl-L-cysteinyl-L-glutamyl-[protein] + H2O = N-terminal L-glutamyl-[protein] + N-acetyl-L-cysteine. Actin maturation protease that specifically mediates the cleavage of immature acetylated N-terminal actin, thereby contributing to actin maturation. Cleaves N-terminal acetylated methionine of immature cytoplasmic beta- and gamma-actins ACTB and ACTG1 after translation. Cleaves N-terminal acetylated cysteine of muscle alpha-actins ACTA1, ACTC1 and ACTA2 after canonical removal of N-terminal methionine. In Bos taurus (Bovine), this protein is Actin maturation protease.